Consider the following 213-residue polypeptide: 3-oxoadipate CoA-transferase subunit B (213 aa).

The active site involves E50.

It belongs to the 3-oxoacid CoA-transferase subunit B family. As to quaternary structure, heterodimer.

The enzyme catalyses 3-oxoadipate + succinyl-CoA = 3-oxoadipyl-CoA + succinate. Its pathway is aromatic compound metabolism; beta-ketoadipate pathway; acetyl-CoA and succinyl-CoA from 3-oxoadipate: step 1/2. This chain is 3-oxoadipate CoA-transferase subunit B (pcaJ), found in Pseudomonas putida (strain ATCC 47054 / DSM 6125 / CFBP 8728 / NCIMB 11950 / KT2440).